A 209-amino-acid polypeptide reads, in one-letter code: Cytidylate kinase (209 aa).

G7–T15 provides a ligand contact to ATP.

This sequence belongs to the cytidylate kinase family. Type 1 subfamily.

It localises to the cytoplasm. It catalyses the reaction CMP + ATP = CDP + ADP. The enzyme catalyses dCMP + ATP = dCDP + ADP. This Afipia carboxidovorans (strain ATCC 49405 / DSM 1227 / KCTC 32145 / OM5) (Oligotropha carboxidovorans) protein is Cytidylate kinase.